Reading from the N-terminus, the 254-residue chain is Small ribosomal subunit protein uS2 (254 aa).

This sequence belongs to the universal ribosomal protein uS2 family.

The polypeptide is Small ribosomal subunit protein uS2 (Borrelia duttonii (strain Ly)).